The chain runs to 203 residues: METLSQDSLLECQICFNYYSPRRRPKLLDCKHTCCSVCLQQMRTSQKDLRCPWCRGITKLPPGYSVSQLPDDPEVIAVIAIPHTSEHTPVFIKLPSNGCYMLPLPLSKERAMLPGDIGCRLLPGSQQKSLAVVTIPAEQQPLQGGLPAEAGAEEPDRRGVVKSSTWSGVCTVILVACVLVFLLGIVLHNMSCISKRFTVISCG.

The RING-type zinc-finger motif lies at 12–55 (CQICFNYYSPRRRPKLLDCKHTCCSVCLQQMRTSQKDLRCPWCR). The helical transmembrane segment at 167 to 187 (SGVCTVILVACVLVFLLGIVL) threads the bilayer.

The protein belongs to the RNF152 family.

The protein localises to the lysosome membrane. The catalysed reaction is S-ubiquitinyl-[E2 ubiquitin-conjugating enzyme]-L-cysteine + [acceptor protein]-L-lysine = [E2 ubiquitin-conjugating enzyme]-L-cysteine + N(6)-ubiquitinyl-[acceptor protein]-L-lysine.. Its pathway is protein modification; protein ubiquitination. Its function is as follows. E3 ubiquitin-protein ligase that acts as a negative regulator of mTORC1 signaling by mediating ubiquitination of RagA/RRAGA and RHEB. Catalyzes 'Lys-63'-linked polyubiquitination of RagA/RRAGA in response to amino acid starvation, thereby regulating mTORC1 signaling. Also mediates monoubiquitination of RHEB, promoting its association with the TSC-TBC complex and subsequent inhibition. Also mediates 'Lys-48'-linked polyubiquitination of target proteins and their subsequent targeting to the proteasome for degradation. The protein is E3 ubiquitin-protein ligase RNF152 of Gallus gallus (Chicken).